A 701-amino-acid polypeptide reads, in one-letter code: DUF724 domain-containing protein 6 (701 aa).

Disordered stretches follow at residues 299–353 (MKTK…KRAN) and 374–452 (VEPV…DESC). Positions 326–340 (LNLEKSAETLTKAES) are enriched in basic and acidic residues. A compositionally biased stretch (polar residues) spans 381–399 (RVRTATPLKQTKADTQGKS). 3 stretches are compositionally biased toward basic and acidic residues: residues 403–412 (KTLEPMRDEN), 421–430 (KVLEEKNSEK), and 437–449 (RQEEHNSDLKETD). The DUF724 domain maps to 514–700 (LPFAKKSPFW…LEFQSTASAP (187 aa)). The stretch at 626 to 670 (LEKKIEAGEIEGHTYEEEMAELELKILELKRQQVVAKEMKEATDK) forms a coiled coil.

Expressed in roots, stems and flowers.

The protein localises to the nucleus. Its function is as follows. May be involved in the polar growth of plant cells via transportation of RNAs. The polypeptide is DUF724 domain-containing protein 6 (Arabidopsis thaliana (Mouse-ear cress)).